The chain runs to 340 residues: MTLVGNFSPLVLVGDSDRVEAETVGAYLDGWAGHDKVRLATANAIKAILSGAGRLVGRIARGYLPGDPGKLVGVNSDQDQQKSIDVGSHNLFVELLIAAGVASILSEEADLPVAGKADGLVAVAIDPLDGSGNVGLGAPLGTIFSIFPADVEEPFLQPGNRQIAAGYVSYGNSVDLGFSVGEGVIFATLDPVSGQFHITRRNVKLPERTSDLAFNASVQRHLSAGMQAYVNDAFLGKDGPRGRNFNMRWLGAAVGDMHRIMQRGGLFFYVNDSRPGYEKGRLRLVYEANPIAFLAREAGGKATDGSRPILDIVPQTYHERSALVFGVAEELDILGEYFVK.

Positions 107, 126, 128, and 129 each coordinate Mg(2+). Asparagine 215 is a binding site for substrate. Residue glutamate 287 coordinates Mg(2+).

Belongs to the FBPase class 1 family. Homotetramer. It depends on Mg(2+) as a cofactor.

It localises to the cytoplasm. The enzyme catalyses beta-D-fructose 1,6-bisphosphate + H2O = beta-D-fructose 6-phosphate + phosphate. It functions in the pathway carbohydrate biosynthesis; gluconeogenesis. This is Fructose-1,6-bisphosphatase class 1 from Brucella suis biovar 1 (strain 1330).